We begin with the raw amino-acid sequence, 625 residues long: MNQLTNLSSAEISAQHEQDAKDLTRILPASKKVYIEGSRPDIQVPMREISLTDTPTGLGGEHNPPIMVYDTSGVYTDPNVQIDLNKGLPSVRQKWIEERNDTDVLSGLTSKFGQERLKDIRTADIRFAHIQNPRRAKAGKNVTQMHYAKQGIITPEMEYIAIRENQRQHEAVDMRQHPGQNFGAKNLKEITPEFVRQEVAEGRAIIPANINHPELEPMIIGRNFLVKINANIGNSALGSSIDEEVAKMTWATRWGADTIMDLSTGKNIHETREWIIRNSPVPIGTVPIYQALEKVDGVAENLTWEIFKDTLIEQAEQGVDYFTIHAGVLLRYVPLTANRLTGIVSRGGSIMAQWCLAHHEENFLYTHFDEICEIMKAYDVSFSLGDGLRPGCIQDANDEAQFSELKTLGELTHRAWERDVQVMIEGPGHVPMHMIKENMDLQLEVCKEAPFYTLGPLTTDIAPGYDHITSAIGAAMIGWYGTAMLCYVTPKEHLGLPNKKDVKDGIITYKIAAHAADLAKGHPGAQARDNALSKARFEFRWDDQFNLSLDPDTARSMHDETLPKEAHKSAHFCSMCGPKFCSMKITQNVRDYANNLTNSDSEVEEGLKAMKEVYQEQGQKLYHKV.

Residues asparagine 231, methionine 260, tyrosine 289, histidine 325, serine 345–glycine 347, aspartate 386–arginine 389, and glutamate 425 each bind substrate. Histidine 429 contacts Zn(2+). A substrate-binding site is contributed by tyrosine 452. Histidine 493 provides a ligand contact to Zn(2+). 3 residues coordinate [4Fe-4S] cluster: cysteine 573, cysteine 576, and cysteine 581.

This sequence belongs to the ThiC family. Homodimer. Requires [4Fe-4S] cluster as cofactor.

It carries out the reaction 5-amino-1-(5-phospho-beta-D-ribosyl)imidazole + S-adenosyl-L-methionine = 4-amino-2-methyl-5-(phosphooxymethyl)pyrimidine + CO + 5'-deoxyadenosine + formate + L-methionine + 3 H(+). It functions in the pathway cofactor biosynthesis; thiamine diphosphate biosynthesis. In terms of biological role, catalyzes the synthesis of the hydroxymethylpyrimidine phosphate (HMP-P) moiety of thiamine from aminoimidazole ribotide (AIR) in a radical S-adenosyl-L-methionine (SAM)-dependent reaction. In Acinetobacter baumannii (strain SDF), this protein is Phosphomethylpyrimidine synthase.